A 447-amino-acid polypeptide reads, in one-letter code: N-succinylarginine dihydrolase (447 aa).

Substrate-binding positions include 19–28 (AGLSFGNEAS), Asn-110, and 137–138 (HR). Glu-174 is a catalytic residue. A substrate-binding site is contributed by Arg-212. The active site involves His-248. Substrate is bound by residues Asp-250 and Asn-359. The active-site Nucleophile is Cys-365.

It belongs to the succinylarginine dihydrolase family. Homodimer.

The catalysed reaction is N(2)-succinyl-L-arginine + 2 H2O + 2 H(+) = N(2)-succinyl-L-ornithine + 2 NH4(+) + CO2. It functions in the pathway amino-acid degradation; L-arginine degradation via AST pathway; L-glutamate and succinate from L-arginine: step 2/5. Catalyzes the hydrolysis of N(2)-succinylarginine into N(2)-succinylornithine, ammonia and CO(2). The sequence is that of N-succinylarginine dihydrolase from Shigella boydii serotype 4 (strain Sb227).